Here is a 379-residue protein sequence, read N- to C-terminus: Alkanesulfonate monooxygenase (379 aa).

This sequence belongs to the SsuD family.

The enzyme catalyses an alkanesulfonate + FMNH2 + O2 = an aldehyde + FMN + sulfite + H2O + 2 H(+). In terms of biological role, catalyzes the desulfonation of aliphatic sulfonates. This Pseudomonas syringae pv. tomato (strain ATCC BAA-871 / DC3000) protein is Alkanesulfonate monooxygenase.